Here is a 266-residue protein sequence, read N- to C-terminus: Signal peptidase I (266 aa).

The Cytoplasmic portion of the chain corresponds to 1–20; it reads MQTDNTKSNTNKTAKQEWWS. Residues 21–41 traverse the membrane as a helical segment; it reads CAFVICIALLIRILIMEPFTV. The Periplasmic segment spans residues 42–266; that stretch reads PTGSMKATIL…IFRNLYNTDE (225 aa). Active-site residues include S45 and K108.

The protein belongs to the peptidase S26 family.

The protein resides in the cell inner membrane. It carries out the reaction Cleavage of hydrophobic, N-terminal signal or leader sequences from secreted and periplasmic proteins.. The protein is Signal peptidase I (lepB) of Rickettsia akari (strain Hartford).